The primary structure comprises 104 residues: ATP synthase subunit c (104 aa).

Helical transmembrane passes span 31 to 51 and 75 to 95; these read SVVAAGIGLGLAALGGAIGMG and MFIALAMIEAQVIYALVVAMI.

The protein belongs to the ATPase C chain family. F-type ATPases have 2 components, F(1) - the catalytic core - and F(0) - the membrane proton channel. F(1) has five subunits: alpha(3), beta(3), gamma(1), delta(1), epsilon(1). F(0) has three main subunits: a(1), b(2) and c(10-14). The alpha and beta chains form an alternating ring which encloses part of the gamma chain. F(1) is attached to F(0) by a central stalk formed by the gamma and epsilon chains, while a peripheral stalk is formed by the delta and b chains.

The protein localises to the cell inner membrane. Functionally, f(1)F(0) ATP synthase produces ATP from ADP in the presence of a proton or sodium gradient. F-type ATPases consist of two structural domains, F(1) containing the extramembraneous catalytic core and F(0) containing the membrane proton channel, linked together by a central stalk and a peripheral stalk. During catalysis, ATP synthesis in the catalytic domain of F(1) is coupled via a rotary mechanism of the central stalk subunits to proton translocation. In terms of biological role, key component of the F(0) channel; it plays a direct role in translocation across the membrane. A homomeric c-ring of between 10-14 subunits forms the central stalk rotor element with the F(1) delta and epsilon subunits. The protein is ATP synthase subunit c of Aliarcobacter butzleri (strain RM4018) (Arcobacter butzleri).